The sequence spans 62 residues: uncharacterized protein (62 aa).

This is an uncharacterized protein from Sinorhizobium fredii (strain NBRC 101917 / NGR234).